The sequence spans 311 residues: Mediator of RNA polymerase II transcription subunit 27 (311 aa).

Residue Ser-132 is modified to Phosphoserine. Lys-134 carries the post-translational modification N6-methyllysine.

It belongs to the Mediator complex subunit 27 family. In terms of assembly, component of the Mediator complex, which is composed of MED1, MED4, MED6, MED7, MED8, MED9, MED10, MED11, MED12, MED13, MED13L, MED14, MED15, MED16, MED17, MED18, MED19, MED20, MED21, MED22, MED23, MED24, MED25, MED26, MED27, MED29, MED30, MED31, CCNC, CDK8 and CDC2L6/CDK11. The MED12, MED13, CCNC and CDK8 subunits form a distinct module termed the CDK8 module. Mediator containing the CDK8 module is less active than Mediator lacking this module in supporting transcriptional activation. Individual preparations of the Mediator complex lacking one or more distinct subunits have been variously termed ARC, CRSP, DRIP, PC2, SMCC and TRAP.

Its subcellular location is the nucleus. Functionally, component of the Mediator complex, a coactivator involved in the regulated transcription of nearly all RNA polymerase II-dependent genes. Mediator functions as a bridge to convey information from gene-specific regulatory proteins to the basal RNA polymerase II transcription machinery. Mediator is recruited to promoters by direct interactions with regulatory proteins and serves as a scaffold for the assembly of a functional preinitiation complex with RNA polymerase II and the general transcription factors. This is Mediator of RNA polymerase II transcription subunit 27 (MED27) from Bos taurus (Bovine).